A 130-amino-acid chain; its full sequence is MTAVGGSPPTRRCPATEDRAPATVATPSSTDPTASRAVSWWSVHEYVAPTLAAAVEWPMAGTPAWCDLDDTDPVKWAAICDAARHWALRVETCQAASAEASRDVSAAADWPAVSREIQRRRDAYIRRVVV.

Residues 1–34 (MTAVGGSPPTRRCPATEDRAPATVATPSSTDPTA) are disordered.

The protein to M.tuberculosis Rv1583c.

This is an uncharacterized protein from Mycobacterium tuberculosis (strain CDC 1551 / Oshkosh).